We begin with the raw amino-acid sequence, 670 residues long: Pescadillo homolog (670 aa).

A coiled-coil region spans residues 292-321 (GANQAQAKVKEAESKRSLMEEELLKVRELF). The BRCT domain maps to 316–402 (KVRELFRGLT…QMLPVTGYRI (87 aa)). The interval 643–670 (RQRAEAKGKKLKEKKADNPYKKLPKWVQ) is disordered. Positions 644 to 662 (QRAEAKGKKLKEKKADNPY) are enriched in basic and acidic residues.

It belongs to the pescadillo family.

The protein resides in the nucleus. It localises to the nucleolus. The protein localises to the nucleoplasm. In terms of biological role, required for maturation of ribosomal RNAs and formation of the large ribosomal subunit. This Leishmania braziliensis protein is Pescadillo homolog.